Reading from the N-terminus, the 444-residue chain is Histidinol dehydrogenase (444 aa).

Tyr-135, Gln-199, and Asn-227 together coordinate NAD(+). Residues Thr-250, Gln-272, and His-275 each contribute to the substrate site. Zn(2+) is bound by residues Gln-272 and His-275. Catalysis depends on proton acceptor residues Glu-341 and His-342. Residues His-342, Asp-375, Glu-429, and His-434 each contribute to the substrate site. Asp-375 serves as a coordination point for Zn(2+). Residue His-434 participates in Zn(2+) binding.

Belongs to the histidinol dehydrogenase family. The cofactor is Zn(2+).

The catalysed reaction is L-histidinol + 2 NAD(+) + H2O = L-histidine + 2 NADH + 3 H(+). The protein operates within amino-acid biosynthesis; L-histidine biosynthesis; L-histidine from 5-phospho-alpha-D-ribose 1-diphosphate: step 9/9. Functionally, catalyzes the sequential NAD-dependent oxidations of L-histidinol to L-histidinaldehyde and then to L-histidine. The protein is Histidinol dehydrogenase (hisD) of Mycobacterium bovis (strain ATCC BAA-935 / AF2122/97).